Consider the following 254-residue polypeptide: MNSFSTLKTLFCGSLLALSLVNTTQAGVSLDRTRIVLTGNENSASVNLKNTSPDIPFLAQSWVENENGQKISSPLVALPPLQRLDGAQKGVVRITKTAEVGLLPQDRESLFYLNVREIPPAPKQANVLQMAMQSRIKLFYRPSAIVPEKPGMVWQDQLVFKKQGNKFIVNNPTPYYITIISLSNKLNGEDSDKLTTFPGLMVAPKASLDIPVKTSNVNQFYMMYVNDYGGHPELKFVCQQDSCKVAPKDQQPKY.

The signal sequence occupies residues 1-26; that stretch reads MNSFSTLKTLFCGSLLALSLVNTTQA.

Belongs to the periplasmic pilus chaperone family.

It localises to the periplasm. In terms of biological role, involved in the biogenesis of the PMF fimbria. The protein is Chaperone protein PmfD (pmfD) of Proteus mirabilis (strain HI4320).